Here is a 355-residue protein sequence, read N- to C-terminus: tRNA-specific 2-thiouridylase MnmA (355 aa).

ATP is bound by residues 7 to 14 (GLSGGVDS) and L33. Catalysis depends on C94, which acts as the Nucleophile. C94 and C193 form a disulfide bridge. Position 119 (G119) interacts with ATP. Positions 143 to 145 (KDQ) are interaction with tRNA. C193 acts as the Cysteine persulfide intermediate in catalysis. Residues 298-299 (RY) are interaction with tRNA.

The protein belongs to the MnmA/TRMU family.

Its subcellular location is the cytoplasm. The catalysed reaction is S-sulfanyl-L-cysteinyl-[protein] + uridine(34) in tRNA + AH2 + ATP = 2-thiouridine(34) in tRNA + L-cysteinyl-[protein] + A + AMP + diphosphate + H(+). Catalyzes the 2-thiolation of uridine at the wobble position (U34) of tRNA, leading to the formation of s(2)U34. In Acaryochloris marina (strain MBIC 11017), this protein is tRNA-specific 2-thiouridylase MnmA.